We begin with the raw amino-acid sequence, 134 residues long: Arginine decarboxylase proenzyme (134 aa).

Ser82 serves as the catalytic Schiff-base intermediate with substrate; via pyruvic acid. Pyruvic acid (Ser); by autocatalysis is present on Ser82. The Proton acceptor; for processing activity role is filled by His87. The Proton donor; for catalytic activity role is filled by Cys102.

It belongs to the prokaryotic AdoMetDC family. Type 1 subfamily. In terms of assembly, heterooctamer of four alpha and four beta chains arranged as a tetramer of alpha/beta heterodimers. Pyruvate is required as a cofactor. In terms of processing, is synthesized initially as an inactive proenzyme. Formation of the active enzyme involves a self-maturation process in which the active site pyruvoyl group is generated from an internal serine residue via an autocatalytic post-translational modification. Two non-identical subunits are generated from the proenzyme in this reaction, and the pyruvate is formed at the N-terminus of the alpha chain, which is derived from the carboxyl end of the proenzyme. The post-translation cleavage follows an unusual pathway, termed non-hydrolytic serinolysis, in which the side chain hydroxyl group of the serine supplies its oxygen atom to form the C-terminus of the beta chain, while the remainder of the serine residue undergoes an oxidative deamination to produce ammonia and the pyruvoyl group blocking the N-terminus of the alpha chain.

The catalysed reaction is L-arginine + H(+) = agmatine + CO2. It participates in amine and polyamine biosynthesis; agmatine biosynthesis; agmatine from L-arginine: step 1/1. In terms of biological role, specifically catalyzes the decarboxylation of L-arginine to agmatine. Has no S-adenosylmethionine decarboxylase (AdoMetDC) activity. The chain is Arginine decarboxylase proenzyme from Caldivirga maquilingensis (strain ATCC 700844 / DSM 13496 / JCM 10307 / IC-167).